We begin with the raw amino-acid sequence, 361 residues long: G-protein coupled receptor 68 (361 aa).

At 1 to 12 (MGNITADNTSMN) the chain is on the extracellular side. 2 N-linked (GlcNAc...) asparagine glycosylation sites follow: asparagine 3 and asparagine 8. Residues 13 to 49 (CDIDHTIHQTLAPVVYVMVLVVGFPANCLSLYYGYLQ) form a helical membrane-spanning segment. Intrachain disulfides connect cysteine 13/cysteine 258 and cysteine 94/cysteine 172. The Cytoplasmic segment spans residues 50-53 (IKAR). The helical transmembrane segment at 54–84 (NELGVYLCNLTVADLFYICSLPFWLQYVLQH) threads the bilayer. Over 85–89 (DHWSH) the chain is Extracellular. The helical transmembrane segment at 90-125 (DDLSCQVCGILLYENIYISVGFLCCISIDRYLAVAH) threads the bilayer. Over 126-133 (PFRFHQFR) the chain is Cytoplasmic. Residues 134 to 160 (TLKAAMGVSALIWVKELLTSIYFLMHE) form a helical membrane-spanning segment. The Extracellular portion of the chain corresponds to 161-176 (EVVEDADRHRVCFEHY). Residues 161-176 (EVVEDADRHRVCFEHY) form an extracellular loop 2 (ECL2) region. The helical transmembrane segment at 177 to 214 (PLEPRQRGINYYRFLVGFLFPICLLLASYRGILRAVRR) threads the bilayer. The Cytoplasmic segment spans residues 215–218 (SHGT). A helical transmembrane segment spans residues 219 to 254 (QKSRKDQIQRLVLSTVVIFLACFLPYHVLLLVRSLW). Topologically, residues 255-260 (ESSCDF) are extracellular. A helical membrane pass occupies residues 261-289 (AKGIFNAYHFSLLLTSFNCVADPVLYCFV). The Cytoplasmic segment spans residues 290–361 (SETTHRDLAR…MGGSPAGGLS (72 aa)). The tract at residues 340 to 361 (LHPAFQTPHPPGMGGSPAGGLS) is disordered. Residues 351 to 361 (GMGGSPAGGLS) are compositionally biased toward gly residues.

It belongs to the G-protein coupled receptor 1 family.

The protein resides in the cell membrane. Activated by a network of residues that connects an extracellular-facing cavity to Glu-149, a conserved charged residue buried in the transmembrane core of the receptor. Protonation likely drives conformational changes in extracellular loop 2 (ECL2), which stabilizes movement of transmembrane 3 (TM3) and a series of rearrangements that connect the extracellular-facing cavity to Glu-149, a residue only conserved in proton-sensing G-protein coupled receptors. Activated in an allosteric manner by divalent metal ions at the extracellular surface following the order: Cd(2+) &gt; Co(2+) &gt; Ni(2+) &gt; Zn(2+) &gt; Fe(2+) &gt; Ca(2+) &gt; Mg(2+). Functionally, proton-sensing G-protein coupled receptor activated by extracellular pH, which is required to monitor pH changes and generate adaptive reactions. The receptor is almost silent at pH 7.8 but fully activated at pH 6.8. Ligand binding causes a conformation change that triggers signaling via guanine nucleotide-binding proteins (G proteins) and modulates the activity of downstream effectors, such as phospholipase C. GPR68 is mainly coupled to G(q) G proteins and mediates production of diacylglycerol (DAG) and inositol 1,4,5-trisphosphate (IP3). Acts as a key mechanosensor of fluid shear stress and membrane stretch. Expressed in endothelial cells of small-diameter resistance arteries, where it mediates flow-induced dilation in response to shear stress. May represents an osteoblastic pH sensor regulating cell-mediated responses to acidosis in bone. Acts as a regulator of calcium-sensing receptor CASR in a seesaw manner: GPR68-mediated signaling inhibits CASR signaling in response to protons, while CASR inhibits GPR68 in presence of extracellular calcium. This chain is G-protein coupled receptor 68 (GPR68), found in Bos taurus (Bovine).